The sequence spans 265 residues: Mlc titration factor A (265 aa).

Zn(2+) is bound by residues His-111, His-148, His-152, and Glu-211.

Belongs to the MtfA family. In terms of assembly, interacts with Mlc. Requires Zn(2+) as cofactor.

The protein localises to the cytoplasm. Functionally, involved in the modulation of the activity of the glucose-phosphotransferase system (glucose-PTS). Interacts with the transcriptional repressor Mlc, preventing its interaction with DNA and leading to the modulation of expression of genes regulated by Mlc, including ptsG, which encodes the PTS system glucose-specific EIICB component. Its function is as follows. Shows zinc-dependent metallopeptidase activity. This Escherichia fergusonii protein is Mlc titration factor A.